The primary structure comprises 513 residues: Proline-rich receptor-like protein kinase PERK3 (513 aa).

Residues 1–123 are Extracellular-facing; the sequence is MARSNRCVPQ…SPPSPSRLST (123 aa). Asn-11 carries N-linked (GlcNAc...) asparagine glycosylation. Positions 27–36 are enriched in polar residues; sequence LKSRWQQITM. A disordered region spans residues 27–119; that stretch reads LKSRWQQITM…GFSLSPPSPS (93 aa). Asn-66 carries N-linked (GlcNAc...) asparagine glycosylation. Over residues 78-89 the composition is skewed to low complexity; it reads PSTSTPPRLGNR. Positions 99–111 are enriched in polar residues; the sequence is GQEPTTPTMTPGF. A helical membrane pass occupies residues 124-144; sequence GAVVGISIGGGVFVLTLIFFL. Residues 145 to 513 are Cytoplasmic-facing; sequence CKKKRPRDDK…TAQRYGGDSL (369 aa). Thr-172 is modified (phosphothreonine). Positions 183–334 constitute a Protein kinase domain; it reads FSEANLLGEG…DFGLAKIALD (152 aa). Residues 189 to 197 and Lys-211 each bind ATP; that span reads LGEGGFGFV. A Phosphotyrosine modification is found at Tyr-256. Asp-307 functions as the Proton acceptor in the catalytic mechanism. Ser-340 bears the Phosphoserine mark. Thr-341 and Thr-346 each carry phosphothreonine. Tyr-354 is modified (phosphotyrosine).

Belongs to the protein kinase superfamily. Ser/Thr protein kinase family. In terms of tissue distribution, expressed at low levels in inflorescence bolt, flower buds, siliques, roots, seedlings and leaves.

Its subcellular location is the cell membrane. The catalysed reaction is L-seryl-[protein] + ATP = O-phospho-L-seryl-[protein] + ADP + H(+). It carries out the reaction L-threonyl-[protein] + ATP = O-phospho-L-threonyl-[protein] + ADP + H(+). The polypeptide is Proline-rich receptor-like protein kinase PERK3 (PERK3) (Arabidopsis thaliana (Mouse-ear cress)).